A 214-amino-acid chain; its full sequence is Membrane-spanning 4-domains subfamily A member 3 (214 aa).

The disordered stretch occupies residues 1–31; sequence MASHEVDNAELGSASAHGTPGSEAGPEELNT. The Cytoplasmic segment spans residues 1–49; the sequence is MASHEVDNAELGSASAHGTPGSEAGPEELNTSVYQPIDGSPDYQKAKLQ. The helical transmembrane segment at 50–70 threads the bilayer; it reads VLGAIQILNAAMILALGVFLG. The Extracellular portion of the chain corresponds to 71–81; sequence SLQYPYHFQKH. A helical transmembrane segment spans residues 82–102; sequence FFFFTFYTGYPIWGAVFFCSS. The Cytoplasmic segment spans residues 103-124; sequence GTLSVVAGIKPTRTWIQNSFGM. A helical membrane pass occupies residues 125–145; that stretch reads NIASATIALVGTAFLSLNIAV. The Extracellular segment spans residues 146–175; the sequence is NIQSLRSCHSSSESPDLCNYMGSISNGMVS. The chain crosses the membrane as a helical span at residues 176-196; the sequence is LLLILTLLELCVTISTIAMWC. Residues 197-214 are Cytoplasmic-facing; the sequence is NANCCNSREEISSPPNSV.

Belongs to the MS4A family. In terms of assembly, interacts with CDKN3. Interacts with CDKN3-CDK2 complexes through its binding to CDKN3; this interaction facilitates dissociation of cyclin A from CDKN3-CDK2 complexes. As to expression, expressed specifically in hematopoietic cells and tissues.

The protein localises to the endomembrane system. The protein resides in the cytoplasm. It localises to the perinuclear region. Its function is as follows. Hematopoietic modulator for the G1-S cell cycle transition. Modulates the level of phosphorylation of cyclin-dependent kinase 2 (CDK2) through its direct binding to cyclin-dependent kinase inhibitor 3 (CDKN3/KAP). In Homo sapiens (Human), this protein is Membrane-spanning 4-domains subfamily A member 3 (MS4A3).